The following is a 354-amino-acid chain: DNA integrity scanning protein DisA (354 aa).

One can recognise a DAC domain in the interval 6-144; sequence GMKIKDTLKI…GDIKYVLRDS (139 aa). Residues Gly-73, Leu-91, and 104–108 each bind ATP; that span reads TRHRT.

This sequence belongs to the DisA family. In terms of assembly, homooctamer. It depends on Mg(2+) as a cofactor.

The catalysed reaction is 2 ATP = 3',3'-c-di-AMP + 2 diphosphate. Functionally, participates in a DNA-damage check-point that is active prior to asymmetric division when DNA is damaged. DisA forms globular foci that rapidly scan along the chromosomes during sporulation, searching for lesions. When a lesion is present, DisA pauses at the lesion site. This triggers a cellular response that culminates in a temporary block in sporulation initiation. Also has diadenylate cyclase activity, catalyzing the condensation of 2 ATP molecules into cyclic di-AMP (c-di-AMP). c-di-AMP acts as a signaling molecule that couples DNA integrity with progression of sporulation. The rise in c-di-AMP level generated by DisA while scanning the chromosome, operates as a positive signal that advances sporulation; upon encountering a lesion, the DisA focus arrests at the damaged site and halts c-di-AMP synthesis. This chain is DNA integrity scanning protein DisA, found in Clostridium botulinum (strain Eklund 17B / Type B).